The primary structure comprises 1129 residues: Egg-laying defective protein 27 (1129 aa).

Residues 1–11 (MSRFDSQCSSE) show a composition bias toward polar residues. Positions 1–43 (MSRFDSQCSSEDVNKEDECVPSSSEDSQDGVSSPMENDDEPEF) are disordered. The span at 22–33 (SSSEDSQDGVSS) shows a compositional bias: low complexity. The BAH domain occupies 87 to 223 (TLYRLRDSVF…QDSTKLASTH (137 aa)). One can recognise an ELM2 domain in the interval 224-327 (YAIRVGTSFQ…DALSELNAND (104 aa)). Residues 332–384 (TDVDNMTQDDAKKFAKGIKQLGKNFSRIHRELLPHHSREQLVSYYYLWKKTPE) enclose the SANT domain. Residues 388–434 (PKQAARRVNPTSIKRPTKEKVKASRPTSTEYLDFDSASESDVENNGP) are disordered. A compositionally biased stretch (acidic residues) spans 419-429 (LDFDSASESDV). Residues 439–485 (CHHCYGAESKDWHHANGLLLCTDCRLHYKKYGQLRQIANRPSQVPAC) form a GATA-type; atypical zinc finger. 5 disordered regions span residues 488-636 (KRSN…DPMP), 693-717 (RDETNGETNSDLKDDENVEPDSPED), 790-814 (QQNQIKKEQQQSQPTPQQIHQQQAQ), 899-950 (MIAE…HAAA), and 982-1040 (MAAQ…REHA). 2 stretches are compositionally biased toward polar residues: residues 525–545 (PSTVSNGAPNLTAEETPTKKL) and 561–573 (VINNVEKSNSSEE). Composition is skewed to acidic residues over residues 613–634 (SYDDDDDEEEGKMTIDEGDDDP) and 705–717 (KDDENVEPDSPED). Residues 899 to 914 (MIAEQQQQQRHAAAQQ) show a composition bias toward low complexity. A compositionally biased stretch (basic and acidic residues) spans 915-932 (LREREQREQRERERERQH). Composition is skewed to low complexity over residues 933–950 (QQQAQQALHQQQQQHAAA) and 983–999 (AAQQQQQQQQAAQAQAQ). Positions 1000 to 1040 (RDQERERREREAREREAAREREREQAAREAAARDQAAREHA) are enriched in basic and acidic residues.

In terms of assembly, interacts with ceh-6, sem-4 and sox-2. Interacts with wdr-5.1. Expression detected in anterior intestine and head region.

The protein localises to the nucleus. Functionally, transcription factor which promotes stress survival and delays aging. Required for cell cycle progression and development of the mesodermal and endodermal embryonic lineages. Required for normal T-cell polarity, for correct migration of QL neuroblast descendants and other cells, for embryonic patterning and for the embryonic expression of hlh-8. Also required for the transdifferentiation of the Y rectal epithelial cell to the PDA motor neuron during larval development. This is Egg-laying defective protein 27 from Caenorhabditis elegans.